The chain runs to 446 residues: MAQKLWEKSVQVNKDIERFTVGRDREMDLYLAKHDVLGSMAHITMLESIGLLTKEELEQLLAELKTIYASVERGEFIIEEGVEDVHSQVELMLTRRLGDVGKKIHSGRSRNDQVLLDLKLFTRTQIREIAEAVEQLFHVLILQSERYKNVLMPGYTHLQIAMPSSFGLWFGAYAESLVDDMQFLQAAFRMCNRNPLGSAAGYGSSFPLNRTMTTDLLGFDSLNYNVVYAQMGRGKLERNVAFALATIAGTISKLAFDACMFNSQNFGFVKLPDDCTTGSSIMPHKKNPDVFELTRAKCNKLQSLPQQIMMIANNLPSGYFRDLQIIKEVFLPAFQELKDCLQMTTYIMNEIKVNEHILDDDKYLFIFSVEEVNRLAREGMPFRDAYKKVGLDIEAGKFTHDKQVHHTHEGSIGNLCNDEISALMQQVVDGFNFCGMEQAEKALLGR.

It belongs to the lyase 1 family. Argininosuccinate lyase subfamily.

Its subcellular location is the cytoplasm. The enzyme catalyses 2-(N(omega)-L-arginino)succinate = fumarate + L-arginine. The protein operates within amino-acid biosynthesis; L-arginine biosynthesis; L-arginine from L-ornithine and carbamoyl phosphate: step 3/3. This is Argininosuccinate lyase from Bacteroides thetaiotaomicron (strain ATCC 29148 / DSM 2079 / JCM 5827 / CCUG 10774 / NCTC 10582 / VPI-5482 / E50).